Reading from the N-terminus, the 67-residue chain is Large ribosomal subunit protein bL35 (67 aa).

Belongs to the bacterial ribosomal protein bL35 family.

This Dehalococcoides mccartyi (strain ATCC BAA-2100 / JCM 16839 / KCTC 5957 / BAV1) protein is Large ribosomal subunit protein bL35.